Here is a 749-residue protein sequence, read N- to C-terminus: ATP-dependent RNA helicase rok1 (749 aa).

2 disordered regions span residues 1–121 (MDAF…EMDE) and 148–182 (NAQT…EQKK). Over residues 17–28 (RAAATSAAQTSR) the composition is skewed to low complexity. Over residues 44–54 (SEADRLLEEKK) the composition is skewed to basic and acidic residues. Positions 69–78 (AGSEDEDAAD) are enriched in acidic residues. The segment covering 98–110 (RHQEQASADKDGD) has biased composition (basic and acidic residues). Over residues 111–120 (SGSEDGSEMD) the composition is skewed to acidic residues. Residues 167–178 (AQQEEPKTLTKK) are compositionally biased toward basic and acidic residues. The Q motif signature appears at 192–224 (VSFKELRTKYKISRRLAENIAEQGFTVPTEVQL). One can recognise a Helicase ATP-binding domain in the interval 241-457 (KPGETVEPDL…KSTIQERKDL (217 aa)). 254–261 (APTGSGKT) contacts ATP. The segment at 324–366 (VVERDGDGDSDEKDVLDEDSADSGSDSEDDEQTTDKKTKGKAP) is disordered. Acidic residues predominate over residues 331-355 (GDSDEKDVLDEDSADSGSDSEDDEQ). Residues 404 to 407 (DEAD) carry the DEAD box motif. Positions 497-665 (GLRQLLHPTA…SVQKWLLDSL (169 aa)) constitute a Helicase C-terminal domain. The disordered stretch occupies residues 672-749 (DKKELKKHGV…GDDSWSGLED (78 aa)). Basic and acidic residues-rich tracts occupy residues 690-699 (SIKDNKEFRQ) and 707-716 (GYERRMENKK). Positions 728–737 (SQPQAPSTGA) are enriched in polar residues.

The protein belongs to the DEAD box helicase family. DDX52/ROK1 subfamily. In terms of assembly, interacts with the U3 snoRNA and is associated with the 90S and 40S pre-ribosomes.

It localises to the nucleus. The protein resides in the nucleolus. It catalyses the reaction ATP + H2O = ADP + phosphate + H(+). Its function is as follows. ATP-dependent RNA helicase involved in 40S ribosomal subunit biogenesis. Required for the processing and cleavage of 35S pre-rRNA at sites A0, A1, and A2, leading to mature 18S rRNA. In Aspergillus terreus (strain NIH 2624 / FGSC A1156), this protein is ATP-dependent RNA helicase rok1 (rok1).